A 549-amino-acid chain; its full sequence is Cytoplasmic trehalase (549 aa).

Residues arginine 168, 175–176, asparagine 212, 221–223, 292–294, and glycine 324 each bind substrate; these read WD, RSQ, and RDE. Catalysis depends on proton donor/acceptor residues aspartate 326 and glutamate 509. Position 525 (glutamate 525) interacts with substrate.

It belongs to the glycosyl hydrolase 37 family. Monomer.

It is found in the cytoplasm. It catalyses the reaction alpha,alpha-trehalose + H2O = alpha-D-glucose + beta-D-glucose. It functions in the pathway glycan degradation; trehalose degradation; D-glucose from alpha,alpha-trehalose: step 1/1. Its function is as follows. Hydrolyzes trehalose to glucose. Could be involved, in cells returning to low osmolarity conditions, in the utilization of the accumulated cytoplasmic trehalose, which was synthesized in response to high osmolarity. This chain is Cytoplasmic trehalase, found in Shigella boydii serotype 4 (strain Sb227).